A 66-amino-acid polypeptide reads, in one-letter code: Photosystem II reaction center protein J (66 aa).

A disordered region spans residues 1–27 (MSGKKSGLPDGRVPDRNPDGTPAVPWK). A helical transmembrane segment spans residues 37 to 57 (LWLVATAGGMAVMFVVGLFFY).

It belongs to the PsbJ family. PSII is composed of 1 copy each of membrane proteins PsbA, PsbB, PsbC, PsbD, PsbE, PsbF, PsbH, PsbI, PsbJ, PsbK, PsbL, PsbM, PsbT, PsbX, PsbY, PsbZ, Psb30/Ycf12, peripheral proteins PsbO, CyanoQ (PsbQ), PsbU, PsbV and a large number of cofactors. It forms dimeric complexes.

It is found in the cellular thylakoid membrane. Its function is as follows. One of the components of the core complex of photosystem II (PSII). PSII is a light-driven water:plastoquinone oxidoreductase that uses light energy to abstract electrons from H(2)O, generating O(2) and a proton gradient subsequently used for ATP formation. It consists of a core antenna complex that captures photons, and an electron transfer chain that converts photonic excitation into a charge separation. The chain is Photosystem II reaction center protein J from Synechococcus sp. (strain RCC307).